Consider the following 122-residue polypeptide: Large ribosomal subunit protein uL14 (122 aa).

The protein belongs to the universal ribosomal protein uL14 family. Part of the 50S ribosomal subunit. Forms a cluster with proteins L3 and L19. In the 70S ribosome, L14 and L19 interact and together make contacts with the 16S rRNA in bridges B5 and B8.

Its function is as follows. Binds to 23S rRNA. Forms part of two intersubunit bridges in the 70S ribosome. The polypeptide is Large ribosomal subunit protein uL14 (Beutenbergia cavernae (strain ATCC BAA-8 / DSM 12333 / CCUG 43141 / JCM 11478 / NBRC 16432 / NCIMB 13614 / HKI 0122)).